A 103-amino-acid polypeptide reads, in one-letter code: A-type ATP synthase subunit F (103 aa).

Belongs to the V-ATPase F subunit family. In terms of assembly, has multiple subunits with at least A(3), B(3), C, D, E, F, H, I and proteolipid K(x).

It is found in the cell membrane. In terms of biological role, component of the A-type ATP synthase that produces ATP from ADP in the presence of a proton gradient across the membrane. This is A-type ATP synthase subunit F from Pyrococcus abyssi (strain GE5 / Orsay).